A 234-amino-acid chain; its full sequence is Isoprenyl transferase (234 aa).

Asp-13 is a catalytic residue. Asp-13 serves as a coordination point for Mg(2+). Substrate-binding positions include 14–17 (GNGR), Trp-18, Arg-26, His-30, and 58–60 (STE). Asn-61 (proton acceptor) is an active-site residue. Residues Trp-62, Arg-64, Arg-180, and 186 to 188 (RLS) contribute to the substrate site. Mg(2+) is bound at residue Glu-199.

It belongs to the UPP synthase family. As to quaternary structure, homodimer. It depends on Mg(2+) as a cofactor.

Catalyzes the condensation of isopentenyl diphosphate (IPP) with allylic pyrophosphates generating different type of terpenoids. This chain is Isoprenyl transferase (uppS), found in Helicobacter pylori (strain ATCC 700392 / 26695) (Campylobacter pylori).